The primary structure comprises 400 residues: Renin (400 aa).

The signal sequence occupies residues Met-1–Gly-23. Positions Leu-24 to Arg-60 are cleaved as a propeptide — activation peptide. A glycan (N-linked (GlcNAc...) asparagine) is linked at Asn-65. In terms of domain architecture, Peptidase A1 spans Tyr-80 to Ala-397. Asp-98 is an active-site residue. A disulfide bridge connects residues Cys-111 and Cys-118. A glycan (N-linked (GlcNAc...) asparagine) is linked at Asn-135. Cys-277 and Cys-281 are joined by a disulfide. Asp-286 is a catalytic residue. A disulfide bond links Cys-319 and Cys-356.

This sequence belongs to the peptidase A1 family. Interacts with ATP6AP2.

The protein localises to the secreted. The protein resides in the membrane. The enzyme catalyses Cleavage of Leu-|-Xaa bond in angiotensinogen to generate angiotensin I.. Its activity is regulated as follows. Interaction with ATP6AP2 results in a 5-fold increased efficiency in angiotensinogen processing. In terms of biological role, renin is a highly specific endopeptidase, whose only known function is to generate angiotensin I from angiotensinogen in the plasma, initiating a cascade of reactions that produce an elevation of blood pressure and increased sodium retention by the kidney. The protein is Renin (REN) of Callithrix jacchus (White-tufted-ear marmoset).